The following is a 355-amino-acid chain: Fe-S cluster assembly protein DRE2 (355 aa).

Residues 23–156 are N-terminal SAM-like domain; that stretch reads TSFNPRTLLL…KPDYSASVAV (134 aa). The interval 157–247 is linker; it reads PLRLRRKDNS…EDTLLTEEDM (91 aa). Residues 189–214 form a disordered region; the sequence is RKSVDMTDDVPEKDVPKVDSPKNDAP. A compositionally biased stretch (basic and acidic residues) spans 190 to 213; that stretch reads KSVDMTDDVPEKDVPKVDSPKNDA. C257, C268, C271, and C273 together coordinate [2Fe-2S] cluster. Residues 257–273 are fe-S binding site A; sequence CAPRAGKRRRACKDCTC. Positions 318, 321, 329, and 332 each coordinate [4Fe-4S] cluster. 2 short sequence motifs (cx2C motif) span residues 318-321 and 329-332; these read CGNC and CDGC. A fe-S binding site B region spans residues 318 to 332; sequence CGNCSLGDAFRCDGC.

It belongs to the anamorsin family. Monomer. Interacts with TAH18. Interacts with MIA40. Requires [2Fe-2S] cluster as cofactor. The cofactor is [4Fe-4S] cluster.

Its subcellular location is the cytoplasm. The protein resides in the mitochondrion intermembrane space. Functionally, component of the cytosolic iron-sulfur (Fe-S) protein assembly (CIA) machinery required for the maturation of extramitochondrial Fe-S proteins. Part of an electron transfer chain functioning in an early step of cytosolic Fe-S biogenesis, facilitating the de novo assembly of a [4Fe-4S] cluster on the scaffold complex CFD1-NBP35. Electrons are transferred to DRE2 from NADPH via the FAD- and FMN-containing protein TAH18. TAH18-DRE2 are also required for the assembly of the diferric tyrosyl radical cofactor of ribonucleotide reductase (RNR), probably by providing electrons for reduction during radical cofactor maturation in the catalytic small subunit RNR2. The sequence is that of Fe-S cluster assembly protein DRE2 from Botryotinia fuckeliana (strain B05.10) (Noble rot fungus).